A 361-amino-acid chain; its full sequence is Histidinol-phosphate aminotransferase (361 aa).

Lysine 221 carries the N6-(pyridoxal phosphate)lysine modification.

It belongs to the class-II pyridoxal-phosphate-dependent aminotransferase family. Histidinol-phosphate aminotransferase subfamily. As to quaternary structure, homodimer. The cofactor is pyridoxal 5'-phosphate.

It catalyses the reaction L-histidinol phosphate + 2-oxoglutarate = 3-(imidazol-4-yl)-2-oxopropyl phosphate + L-glutamate. Its pathway is amino-acid biosynthesis; L-histidine biosynthesis; L-histidine from 5-phospho-alpha-D-ribose 1-diphosphate: step 7/9. The polypeptide is Histidinol-phosphate aminotransferase (Symbiobacterium thermophilum (strain DSM 24528 / JCM 14929 / IAM 14863 / T)).